The sequence spans 522 residues: Cytochrome b mRNA maturase bI3 (522 aa).

The Mitochondrial matrix portion of the chain corresponds to 1–31 (MTIRKSNPYLSLVNSYLMDSPQPSSMNYWWN). Positions 1-163 (MTIRKSNPYL…MPFMGGDLVP (163 aa)) are cytochrome b. Residues 32-52 (VGSLLGLCLVMQMASGMFLAM) traverse the membrane as a helical segment. Over 53 to 84 (HYSSSMELAFNSVEHMMRDVNAGWLMRYIHAN) the chain is Mitochondrial intermembrane. The chain crosses the membrane as a helical span at residues 85-105 (GASFFFMCLYLHMGKALYYGS). Residues 106-110 (YKSPR) are Mitochondrial matrix-facing. A helical transmembrane segment spans residues 111 to 131 (VLVWSMGVMMFMLTMATAFMG). Residues 132–154 (YCLVYGQMSHWGATVITNLLSAM) lie on the Mitochondrial intermembrane side of the membrane. The helical transmembrane segment at 155–175 (PFMGGDLVPLSIILSLYLLYI) threads the bilayer. The segment at 164-522 (LSIILSLYLL…PYMSWHQKEQ (359 aa)) is maturase. The Mitochondrial matrix segment spans residues 176-522 (SLKTFMKMIF…PYMSWHQKEQ (347 aa)).

It in the N-terminal section; belongs to the cytochrome b family. The protein in the C-terminal section; belongs to the LAGLIDADG endonuclease family.

The protein localises to the mitochondrion inner membrane. Functionally, mitochondrial mRNA maturase required for splicing of intron 3 of the cytochrome b (COB) gene, containing its own coding sequence. The chain is Cytochrome b mRNA maturase bI3 (bI3) from Debaryomyces hansenii (strain ATCC 36239 / CBS 767 / BCRC 21394 / JCM 1990 / NBRC 0083 / IGC 2968) (Yeast).